Reading from the N-terminus, the 1043-residue chain is Polycomb protein Pcl (1043 aa).

Disordered regions lie at residues 1–34 (MMNNHFHLQHDHPPQNVAHPFMQQPSTAVPSAPP), 271–302 (PDSTTTTPQTPPTTPEAMSSPGKSSPSPPLLA), 317–346 (FKTVEAAPPTPPTPPSPPPPPPAPPVAAPS), and 395–422 (KLRKLGGGSSITAGGGGASTTESTNTSP). The segment covering 25 to 34 (PSTAVPSAPP) has biased composition (low complexity). Residues 324–344 (PPTPPTPPSPPPPPPAPPVAA) show a composition bias toward pro residues. Residues 349–404 (VTYALQEDVFIKCNDGRFYLGTIIDQTSDQYLIRFDDQSEQWCEPDKLRKLGGGSS) enclose the Tudor domain. Residues 399-412 (LGGGSSITAGGGGA) are compositionally biased toward gly residues. 2 consecutive PHD-type zinc fingers follow at residues 424–472 (GPMC…CAKP) and 512–560 (QIYC…VFCC). Basic and acidic residues predominate over residues 737 to 757 (AKKQAAQKADKHDELPLKPDL). 2 disordered regions span residues 737–819 (AKKQ…TSSL) and 931–985 (AKDL…PGHS). Basic residues predominate over residues 783–792 (SRKRKAFRLS). Positions 793–804 (KRYDNSRNHCDL) are enriched in basic and acidic residues. Ser-805 and Ser-806 each carry phosphoserine. Residues 807-819 (DENSSSSRGTSSL) are compositionally biased toward low complexity. A compositionally biased stretch (basic residues) spans 945–954 (THGRLLRQRP). Residues 955-977 (QKQSPSQSRRNSTSSTATSSSSN) are compositionally biased toward low complexity.

This sequence belongs to the Polycomblike family. Component of a form of the Esc/E(z) complex present specifically during early embryogenesis which is composed of Caf1-55, esc, E(z), Su(z)12, Pcl and HDAC1/Rpd3. This complex is distinct from the PRC1 complex, which contains many other PcG proteins like Pc, Ph, Psc, Su(z)2. The two complexes however cooperate and interact together during the first 3 hours of development to establish PcG silencing. Interacts with corto in vitro.

The protein localises to the nucleus. It is found in the chromosome. Its function is as follows. Polycomb group (PcG) protein. While PcG proteins are generally required to maintain the transcriptionally repressive state of homeotic genes throughout development, this protein is specifically required during the first 6 hours of embryogenesis to establish the repressed state. Component of the Esc/E(z) complex, which methylates 'Lys-9' and 'Lys-27' residues of histone H3, leading to transcriptional repression of the affected target gene. The Esc/E(z) complex is necessary but not sufficient for the repression of homeotic target genes, suggesting that the recruitment of the distinct PRC1 complex is also required. Required for the correct spatial expression of the homeotic genes of the Antennapedia and Bithorax complexes. This is Polycomb protein Pcl (Pcl) from Drosophila melanogaster (Fruit fly).